A 175-amino-acid chain; its full sequence is MIDDDGYRPNVGIVICNRQGQVLWARRYGQHSWQFPQGGINPGETAEQAMYRELFEEVGLSKKDVRILASTRNWLRYKLPKRLVRWDTKPVCIGQKQKWFLLQLMCNDADINMQRSSTPEFDGWRWVSFWYPVRQVVSFKRDVYRRVMKEFAVTVMPMQEQAAQRQTPAYRRKRG.

A Nudix hydrolase domain is found at 6–149 (GYRPNVGIVI…KRDVYRRVMK (144 aa)). The Nudix box signature appears at 38–59 (GGINPGETAEQAMYRELFEEVG).

It belongs to the Nudix hydrolase family. RppH subfamily. A divalent metal cation serves as cofactor.

Functionally, accelerates the degradation of transcripts by removing pyrophosphate from the 5'-end of triphosphorylated RNA, leading to a more labile monophosphorylated state that can stimulate subsequent ribonuclease cleavage. This is RNA pyrophosphohydrolase from Serratia proteamaculans (strain 568).